A 132-amino-acid polypeptide reads, in one-letter code: Protein MrkF (132 aa).

Its subcellular location is the fimbrium. In terms of biological role, appears to affect the stability of the intact fimbriae on the cell surface. The protein is Protein MrkF (mrkF) of Klebsiella pneumoniae.